We begin with the raw amino-acid sequence, 213 residues long: LexA repressor (213 aa).

A DNA-binding region (H-T-H motif) is located at residues 31–51; it reads RAEISRELGFRSPNAAEEYLK. Residues Ser-129 and Lys-166 each act as for autocatalytic cleavage activity in the active site.

Belongs to the peptidase S24 family. In terms of assembly, homodimer.

It catalyses the reaction Hydrolysis of Ala-|-Gly bond in repressor LexA.. Functionally, represses a number of genes involved in the response to DNA damage (SOS response), including recA and lexA. In the presence of single-stranded DNA, RecA interacts with LexA causing an autocatalytic cleavage which disrupts the DNA-binding part of LexA, leading to derepression of the SOS regulon and eventually DNA repair. The sequence is that of LexA repressor from Mannheimia succiniciproducens (strain KCTC 0769BP / MBEL55E).